We begin with the raw amino-acid sequence, 883 residues long: Lysine-specific demethylase JMJ29 (883 aa).

Disordered stretches follow at residues 30–62 and 161–204; these read KPFM…SAVK and RTHS…SRKQ. Positions 34–43 are enriched in low complexity; sequence SKGSSPSSSS. 2 stretches are compositionally biased toward polar residues: residues 161–172 and 184–204; these read RTHSLSANSPEN and SPAS…SRKQ. 12 residues coordinate Zn(2+): C209, C212, C223, C226, C232, C235, C252, C255, C338, C341, C363, and H381. An RING-type; degenerate zinc finger spans residues 209–256; the sequence is CHQCLKGERITLLICSECEKTMFCLQCIRKWYPNLSEDDVVEKCPLCR. The B box-type; atypical zinc finger occupies 333 to 392; that stretch reads DERVYCDHCATSIVDLHRSCPKCSYELCLKCCQEIREGSLSERPEMKFHYVDRGHRYMHG. The JmjC domain occupies 632-863; that stretch reads PRTGILNIAT…ECLRLTEEFR (232 aa). Residues H676 and D678 each contribute to the Fe cation site. The tract at residues 713–743 is disordered; sequence NKVDKQSTEDCNEKEEEEEEELNMPEISSNE. The span at 722–735 shows a compositional bias: acidic residues; that stretch reads DCNEKEEEEEEELN. The Nuclear localization signal signature appears at 755–762; that stretch reads FRREDVPK. H831 provides a ligand contact to Fe cation.

The protein belongs to the JARID1 histone demethylase family. Fe(2+) is required as a cofactor. As to expression, expressed in inflorescences, roots, siliques, leaves and stems.

Its subcellular location is the nucleus. Its function is as follows. May function as histone H3 lysine demethylase and be involved in regulation of gene expression. The protein is Lysine-specific demethylase JMJ29 of Arabidopsis thaliana (Mouse-ear cress).